We begin with the raw amino-acid sequence, 116 residues long: Beta-2-microglobulin (116 aa).

A signal peptide spans 1 to 19 (MRAIITFALFCVLYVTVQG). In terms of domain architecture, Ig-like C1-type spans 24-110 (PKVQVYSHFP…VRHMNNKNIY (87 aa)). Cys-44 and Cys-99 form a disulfide bridge.

The protein belongs to the beta-2-microglobulin family. In terms of assembly, heterodimer of an alpha chain and a beta chain. Beta-2-microglobulin is the beta-chain of major histocompatibility complex class I molecules.

Its subcellular location is the secreted. Component of the class I major histocompatibility complex (MHC). Involved in the presentation of peptide antigens to the immune system. The protein is Beta-2-microglobulin (b2m) of Cyprinus carpio (Common carp).